A 303-amino-acid polypeptide reads, in one-letter code: tRNA dimethylallyltransferase 1 (303 aa).

17–24 is a binding site for ATP; sequence GPTACGKT. 19–24 contacts substrate; sequence TACGKT. The interval 42 to 45 is interaction with substrate tRNA; that stretch reads DSRQ.

Belongs to the IPP transferase family. In terms of assembly, monomer. Requires Mg(2+) as cofactor.

The catalysed reaction is adenosine(37) in tRNA + dimethylallyl diphosphate = N(6)-dimethylallyladenosine(37) in tRNA + diphosphate. Functionally, catalyzes the transfer of a dimethylallyl group onto the adenine at position 37 in tRNAs that read codons beginning with uridine, leading to the formation of N6-(dimethylallyl)adenosine (i(6)A). The sequence is that of tRNA dimethylallyltransferase 1 from Hahella chejuensis (strain KCTC 2396).